The chain runs to 93 residues: Small ribosomal subunit protein uS19 (93 aa).

This sequence belongs to the universal ribosomal protein uS19 family.

Protein S19 forms a complex with S13 that binds strongly to the 16S ribosomal RNA. This chain is Small ribosomal subunit protein uS19, found in Agathobacter rectalis (strain ATCC 33656 / DSM 3377 / JCM 17463 / KCTC 5835 / VPI 0990) (Eubacterium rectale).